The primary structure comprises 951 residues: Leucine-rich repeat-containing G-protein coupled receptor 4 (951 aa).

A signal peptide spans 1–24 (MPGPLGLLCFLALGLLGSAGPSGA). An LRRNT domain is found at 25–57 (APPLCAAPCSCDGDRRVDCSGKGLTAVPEGLSA). Residues 25-544 (APPLCAAPCS…LLGSWMIRLT (520 aa)) are Extracellular-facing. Disulfide bonds link Cys29–Cys35 and Cys33–Cys43. LRR repeat units lie at residues 58–79 (FTQALDISMNNITQLPEDAFKN), 82–103 (FLEELQLAGNDLSFIHPKALSG), 106–127 (ELKVLTLQNNQLKTVPSEAIRG), 130–151 (ALQSLRLDANHITSVPEDSFEG), 154–177 (QLRHLWLDDNSLTEVPVHPLSNLP), 178–199 (TLQALTLALNKISSIPDFAFTN), 202–223 (SLVVLHLHNNKIRSLSQHCFDG), 226–247 (NLETLDLNYNNLGEFPQAIKAL), 249–270 (SLKELGFHSNSISVIPDGAFDG), and 273–294 (LLRTIHLYDNPLSFVGNSAFHN). An N-linked (GlcNAc...) asparagine glycan is attached at Asn68. Asn199 is a glycosylation site (N-linked (GlcNAc...) asparagine). Asn294 and Asn314 each carry an N-linked (GlcNAc...) asparagine glycan. LRR repeat units follow at residues 320–341 (HLESLTLTGTKISSIPNNLCQE), 344–365 (MLRTLDLSYNNIRDLPSFNGCH), 366–387 (ALEEISLQRNQIYQIKEGTFQG), 390–411 (SLRILDLSRNLIHEIHSRAFAT), and 414–435 (PITNLDVSFNELTSFPTEGLNG). A disulfide bridge connects residues Cys339 and Cys364. 2 cysteine pairs are disulfide-bonded: Cys470/Cys522 and Cys471/Cys476. The N-linked (GlcNAc...) asparagine glycan is linked to Asn505. The helical transmembrane segment at 545-565 (VWFIFLVALFFNLLVILTTFA) threads the bilayer. Residues 566–575 (SCTSLPSSKL) are Cytoplasmic-facing. Residues 576 to 596 (FIGLISVSNLFMGIYTGILTF) form a helical membrane-spanning segment. Residues 597–620 (LDAVSWGRFAEFGIWWETGSGCKV) lie on the Extracellular side of the membrane. The cysteines at positions 618 and 693 are disulfide-linked. Residues 621 to 641 (AGFLAVFSSESAIFLLMLATV) traverse the membrane as a helical segment. Topologically, residues 642–661 (ERSLSAKDIMKNGKSNHLKQ) are cytoplasmic. The helical transmembrane segment at 662–682 (FRVAALLAFLGATVAGCFPLF) threads the bilayer. At 683-703 (HRGEYSASPLCLPFPTGETPS) the chain is on the extracellular side. Residues 704 to 724 (LGFTVTLVLLNSLAFLLMAVI) form a helical membrane-spanning segment. Residues 725–756 (YTKLYCNLEKEDLSENSQSSMIKHVAWLIFTN) are Cytoplasmic-facing. The chain crosses the membrane as a helical span at residues 757-777 (CIFFCPVAFFSFAPLITAISI). The Extracellular portion of the chain corresponds to 778-783 (SPEIMK). The helical transmembrane segment at 784–804 (SVTLIFFPLPACLNPVLYVFF) threads the bilayer. Topologically, residues 805-951 (NPKFKEDWKL…YAYNLPRVKD (147 aa)) are cytoplasmic. At Ser920 the chain carries Phosphoserine.

The protein belongs to the G-protein coupled receptor 1 family. As to expression, expressed in multiple steroidogenic tissues: placenta, ovary, testis and adrenal. Expressed also in spinal cord, thyroid, stomach, trachea, heart, pancreas, kidney, prostate and spleen.

It is found in the cell membrane. Functionally, receptor for R-spondins that potentiates the canonical Wnt signaling pathway and is involved in the formation of various organs. Upon binding to R-spondins (RSPO1, RSPO2, RSPO3 or RSPO4), associates with phosphorylated LRP6 and frizzled receptors that are activated by extracellular Wnt receptors, triggering the canonical Wnt signaling pathway to increase expression of target genes. In contrast to classical G-protein coupled receptors, does not activate heterotrimeric G-proteins to transduce the signal. Its function as activator of the Wnt signaling pathway is required for the development of various organs, including liver, kidney, intestine, bone, reproductive tract and eye. May also act as a receptor for norrin (NDP), such results however require additional confirmation in vivo. Required during spermatogenesis to activate the Wnt signaling pathway in peritubular myoid cells. Required for the maintenance of intestinal stem cells and Paneth cell differentiation in postnatal intestinal crypts. Acts as a regulator of bone formation and remodeling. Involved in kidney development; required for maintaining the ureteric bud in an undifferentiated state. Involved in the development of the anterior segment of the eye. Required during erythropoiesis. Also acts as a negative regulator of innate immunity by inhibiting TLR2/TLR4 associated pattern-recognition and pro-inflammatory cytokine production. Plays an important role in regulating the circadian rhythms of plasma lipids, partially through regulating the rhythmic expression of MTTP. Required for proper development of GnRH neurons (gonadotropin-releasing hormone expressing neurons) that control the release of reproductive hormones from the pituitary gland. The polypeptide is Leucine-rich repeat-containing G-protein coupled receptor 4 (LGR4) (Homo sapiens (Human)).